The following is a 399-amino-acid chain: Tyrosine--tRNA ligase (399 aa).

A 'HIGH' region motif is present at residues 42-51; the sequence is PTAPDIHLGH. The 'KMSKS' region signature appears at 226-230; it reads KMSKS. Lys229 contributes to the ATP binding site. The S4 RNA-binding domain occupies 337–398; the sequence is LTIGYILQRA…GKRRFAKVKV (62 aa).

This sequence belongs to the class-I aminoacyl-tRNA synthetase family. TyrS type 2 subfamily. Homodimer.

It is found in the cytoplasm. The catalysed reaction is tRNA(Tyr) + L-tyrosine + ATP = L-tyrosyl-tRNA(Tyr) + AMP + diphosphate + H(+). In terms of biological role, catalyzes the attachment of tyrosine to tRNA(Tyr) in a two-step reaction: tyrosine is first activated by ATP to form Tyr-AMP and then transferred to the acceptor end of tRNA(Tyr). This chain is Tyrosine--tRNA ligase, found in Coxiella burnetii (strain RSA 493 / Nine Mile phase I).